The following is a 281-amino-acid chain: Nucleoid occlusion protein (281 aa).

Positions 145–164 (EALAQRLGKGQSTIANKLRL) form a DNA-binding region, H-T-H motif.

It belongs to the ParB family.

Its subcellular location is the cytoplasm. The protein resides in the nucleoid. In terms of biological role, effects nucleoid occlusion by binding relatively nonspecifically to DNA and preventing the assembly of the division machinery in the vicinity of the nucleoid, especially under conditions that disturb the cell cycle. It helps to coordinate cell division and chromosome segregation by preventing the formation of the Z ring through the nucleoid, which would cause chromosome breakage. This chain is Nucleoid occlusion protein, found in Geobacillus sp. (strain WCH70).